The primary structure comprises 217 residues: Carbon disulfide hydrolase (217 aa).

Cys39, His98, and Cys101 together coordinate Zn(2+). Residues 192–217 are disordered; sequence DKEKRARTDCTPTPYGVKGNQPPRWK.

The protein belongs to the beta-class carbonic anhydrase family. As to quaternary structure, forms only homooctamers in solution. Zn(2+) is required as a cofactor.

It carries out the reaction carbon disulfide + 2 H2O = 2 hydrogen sulfide + CO2 + 2 H(+). Its pathway is sulfur metabolism; hydrogen sulfide biosynthesis. Its function is as follows. Catalyzes the conversion of carbon disulfide into hydrogen sulfide and carbon dioxide, with carbonyl sulfide as an intermediate. Likely plays a key role in sulfur metabolism that allows A.thiooxidans S1p to grow on carbon disulfide as the main carbon and energy source. Does not show carbonic anhydrase activity (hydration of CO(2) to carbonate). This chain is Carbon disulfide hydrolase, found in Acidithiobacillus thiooxidans (Thiobacillus thiooxidans).